Consider the following 230-residue polypeptide: MKIGIIGAMEPEVAHLVESMEKPSSTTIAGIEFVAGQLAGKEVIVTRSGIGKVTASIATTLLIEKYAPDAIINTGSAGGFADDLAIGDIVISSEVRHHDVDVTAFGYEIGQMAQQPAAFIPDAKLVAAAQKAVASLGEVKAIEGLICTGDSFICDPVRTKTMLENFPTMAACEMEGAAIAQVCHQFDVPFVVIRSLSDNANNDSPVDFDEYIVKAGHHSALMVIALLEQL.

Glu-12 serves as the catalytic Proton acceptor. Residues Gly-78, Ile-153, and 174–175 (ME) each bind substrate. The active-site Proton donor is Asp-198.

This sequence belongs to the PNP/UDP phosphorylase family. MtnN subfamily.

It carries out the reaction S-adenosyl-L-homocysteine + H2O = S-(5-deoxy-D-ribos-5-yl)-L-homocysteine + adenine. The enzyme catalyses S-methyl-5'-thioadenosine + H2O = 5-(methylsulfanyl)-D-ribose + adenine. The catalysed reaction is 5'-deoxyadenosine + H2O = 5-deoxy-D-ribose + adenine. It functions in the pathway amino-acid biosynthesis; L-methionine biosynthesis via salvage pathway; S-methyl-5-thio-alpha-D-ribose 1-phosphate from S-methyl-5'-thioadenosine (hydrolase route): step 1/2. Its function is as follows. Catalyzes the irreversible cleavage of the glycosidic bond in both 5'-methylthioadenosine (MTA) and S-adenosylhomocysteine (SAH/AdoHcy) to adenine and the corresponding thioribose, 5'-methylthioribose and S-ribosylhomocysteine, respectively. Also cleaves 5'-deoxyadenosine, a toxic by-product of radical S-adenosylmethionine (SAM) enzymes, into 5-deoxyribose and adenine. In Shewanella pealeana (strain ATCC 700345 / ANG-SQ1), this protein is 5'-methylthioadenosine/S-adenosylhomocysteine nucleosidase.